We begin with the raw amino-acid sequence, 438 residues long: Exoglucanase 3 (438 aa).

The signal sequence occupies residues 1-20 (MFKFAALLALASLVPGFVQA). Residues 21–59 (QSPVWGQCGGNGWTGPTTCASGSTCVKQNDFYSQCLPNN) form the CBM1 domain. 2 disulfide bridges follow: Cys28/Cys45 and Cys39/Cys55. The disordered stretch occupies residues 57–90 (PNNQAPPSTTTQPGTTPPATTTSGGTGPTSGAGN). A linker region spans residues 60–87 (QAPPSTTTQPGTTPPATTTSGGTGPTSG). A compositionally biased stretch (low complexity) spans 61-79 (APPSTTTQPGTTPPATTTS). The tract at residues 88-438 (AGNPYTGKTV…TLVANANPAL (351 aa)) is catalytic. Intrachain disulfides connect Cys170/Cys229 and Cys360/Cys407. The Proton donor role is filled by Asp215. Asp393 serves as the catalytic Nucleophile.

The protein belongs to the glycosyl hydrolase 6 (cellulase B) family.

The enzyme catalyses Hydrolysis of (1-&gt;4)-beta-D-glucosidic linkages in cellulose and cellotetraose, releasing cellobiose from the non-reducing ends of the chains.. In terms of biological role, shows enzymatic activity towards crystalline cellulose. At long reaction times. It is also able to degrade carboxymethyl cellulose and barley B-glucan. In Agaricus bisporus (White button mushroom), this protein is Exoglucanase 3 (cel3).